We begin with the raw amino-acid sequence, 78 residues long: Large ribosomal subunit protein bL31 (78 aa).

4 residues coordinate Zn(2+): Cys-16, Cys-18, Cys-38, and Cys-41.

It belongs to the bacterial ribosomal protein bL31 family. Type A subfamily. In terms of assembly, part of the 50S ribosomal subunit. It depends on Zn(2+) as a cofactor.

Its function is as follows. Binds the 23S rRNA. The chain is Large ribosomal subunit protein bL31 from Frankia casuarinae (strain DSM 45818 / CECT 9043 / HFP020203 / CcI3).